We begin with the raw amino-acid sequence, 207 residues long: Peptidyl-prolyl cis-trans isomerase FKBP16-1, chloroplastic (207 aa).

One can recognise a PPIase FKBP-type domain in the interval 104–207 (GDLVELNYVC…VFEIQLLKVL (104 aa)).

This sequence belongs to the FKBP-type PPIase family.

It localises to the plastid. The protein resides in the chloroplast thylakoid lumen. It carries out the reaction [protein]-peptidylproline (omega=180) = [protein]-peptidylproline (omega=0). Functionally, PPIases accelerate the folding of proteins. It catalyzes the cis-trans isomerization of proline imidic peptide bonds in oligopeptides. The polypeptide is Peptidyl-prolyl cis-trans isomerase FKBP16-1, chloroplastic (FKBP16-1) (Arabidopsis thaliana (Mouse-ear cress)).